A 910-amino-acid polypeptide reads, in one-letter code: Potassium/sodium hyperpolarization-activated cyclic nucleotide-gated channel 1 (910 aa).

Residues 1–75 form a disordered region; that stretch reads MEGGGKPNSA…PAGSFEDAEG (75 aa). The Cytoplasmic portion of the chain corresponds to 1–131; the sequence is MEGGGKPNSA…WIIHPYSDFR (131 aa). Residues 132-153 form a helical membrane-spanning segment; sequence FYWDLIMLIMMVGNLVIIPVGI. Residues 154-162 are Extracellular-facing; that stretch reads TFFTEQTTT. The helical transmembrane segment at 163–183 threads the bilayer; sequence PWIIFNVASDTVFLLDLIMNF. The Cytoplasmic portion of the chain corresponds to 184-204; it reads RTGTVNEDSSEIILDPKVIKM. A helical membrane pass occupies residues 205-225; it reads NYLKSWFVVDFISSIPVDYIF. Topologically, residues 226–249 are extracellular; the sequence is LIVEKGMDSEVYKTARALRIVRFT. The chain crosses the membrane as a helical; Voltage-sensor span at residues 250–270; sequence KILSLLRLLRLSRLIRYIHQW. Over 271–284 the chain is Cytoplasmic; it reads EEIFHMTYDLASAV. A helical membrane pass occupies residues 285–307; it reads VRIFNLIGMMLLLCHWDGCLQFL. At 308–333 the chain is on the extracellular side; it reads VPLLQDFPPDCWVSLNEMVNDSWGKQ. N327 carries an N-linked (GlcNAc...) asparagine glycan. An intramembrane region (pore-forming) is located at residues 334 to 355; the sequence is YSYALFKAMSHMLCIGYGAQAP. Residues 347 to 351 carry the Selectivity filter motif; it reads CIGYG. At 356 to 360 the chain is on the extracellular side; sequence VSMSD. A helical transmembrane segment spans residues 361-381; that stretch reads LWITMLSMIVGATCYAMFVGH. At 382-910 the chain is on the cytoplasmic side; sequence ATALIQSLDS…AEKPRFASNL (529 aa). G528, E529, C531, R538, T539, R579, and R582 together coordinate 3',5'-cyclic AMP. 3 disordered regions span residues 634 to 681, 771 to 791, and 865 to 910; these read TALN…QPSA, QQQQQPQTPGSSTPKNEVHKS, and QMSS…ASNL. Residues 639 to 680 are compositionally biased toward low complexity; the sequence is TSSTTTPTSRMRTQSPPVYTATSLSHSNLHSPSPSTQTPQPS. Over residues 780–791 the composition is skewed to polar residues; sequence GSSTPKNEVHKS. Residues 875-885 are compositionally biased toward pro residues; sequence RGVPPAPPPPA. Residues 900–910 are compositionally biased toward basic and acidic residues; sequence DAEKPRFASNL.

It belongs to the potassium channel HCN family. Homotetramer. Heterotetramer with HCN2. The potassium channel is composed of a homo- or heterotetrameric complex of pore-forming subunits. Interacts with KCNE2. Interacts with the SH3 domain of CSK. Post-translationally, N-glycosylated. In terms of tissue distribution, predominantly expressed in brain. Highly expressed in apical dendrites of pyramidal neurons in the cortex, in the layer corresponding to the stratum lacunosum-moleculare in the hippocampus and in axons of basket cells in the cerebellum (at protein level). Expressed in a subset of elongated cells in taste buds.

The protein localises to the cell membrane. The catalysed reaction is Na(+)(in) = Na(+)(out). It catalyses the reaction K(+)(in) = K(+)(out). With respect to regulation, activated by cAMP. cAMP binding causes a conformation change that leads to the assembly of an active tetramer and channel opening. Compared to other family members, cAMP has less stimulatory effect on HCN1 because part of the molecules already contain bound cAMP and form homotetramers when cAMP levels are low, this inherent tetramerization in HCN1 results in a weaker response to increased cAMP. In terms of biological role, hyperpolarization-activated ion channel that are permeable to sodium and potassium ions. Exhibits weak selectivity for potassium over sodium ions. Contributes to the native pacemaker currents in heart (If) and in neurons (Ih). Participates in cerebellar mechanisms of motor learning. May mediate responses to sour stimuli. In Mus musculus (Mouse), this protein is Potassium/sodium hyperpolarization-activated cyclic nucleotide-gated channel 1 (Hcn1).